We begin with the raw amino-acid sequence, 179 residues long: Large ribosomal subunit protein uL5 (179 aa).

Belongs to the universal ribosomal protein uL5 family. Part of the 50S ribosomal subunit; part of the 5S rRNA/L5/L18/L25 subcomplex. Contacts the 5S rRNA and the P site tRNA. Forms a bridge to the 30S subunit in the 70S ribosome.

Its function is as follows. This is one of the proteins that bind and probably mediate the attachment of the 5S RNA into the large ribosomal subunit, where it forms part of the central protuberance. In the 70S ribosome it contacts protein S13 of the 30S subunit (bridge B1b), connecting the 2 subunits; this bridge is implicated in subunit movement. Contacts the P site tRNA; the 5S rRNA and some of its associated proteins might help stabilize positioning of ribosome-bound tRNAs. The protein is Large ribosomal subunit protein uL5 of Photobacterium profundum (strain SS9).